Consider the following 610-residue polypeptide: Pyruvate decarboxylase 1 (610 aa).

Positions 72 and 159 each coordinate substrate. A thiamine pyrophosphate binding region spans residues Asp-437–Ile-519. Mg(2+) is bound by residues Asp-487, Asn-514, and Gly-516. Residue Glu-520 coordinates substrate.

This sequence belongs to the TPP enzyme family. Homotetramer. Requires a metal cation as cofactor. Thiamine diphosphate is required as a cofactor.

It carries out the reaction a 2-oxocarboxylate + H(+) = an aldehyde + CO2. This chain is Pyruvate decarboxylase 1 (PDC1), found in Zea mays (Maize).